Here is a 274-residue protein sequence, read N- to C-terminus: Acetyl-coenzyme A carboxylase carboxyl transferase subunit alpha (274 aa).

The 249-residue stretch at 2 to 250 (NKEFIKSIVV…KKELMNAMNE (249 aa)) folds into the CoA carboxyltransferase C-terminal domain.

Belongs to the AccA family. Acetyl-CoA carboxylase is a heterohexamer composed of biotin carboxyl carrier protein (AccB), biotin carboxylase (AccC) and two subunits each of ACCase subunit alpha (AccA) and ACCase subunit beta (AccD).

It localises to the cytoplasm. The catalysed reaction is N(6)-carboxybiotinyl-L-lysyl-[protein] + acetyl-CoA = N(6)-biotinyl-L-lysyl-[protein] + malonyl-CoA. It functions in the pathway lipid metabolism; malonyl-CoA biosynthesis; malonyl-CoA from acetyl-CoA: step 1/1. Functionally, component of the acetyl coenzyme A carboxylase (ACC) complex. First, biotin carboxylase catalyzes the carboxylation of biotin on its carrier protein (BCCP) and then the CO(2) group is transferred by the carboxyltransferase to acetyl-CoA to form malonyl-CoA. In Clostridium botulinum (strain Eklund 17B / Type B), this protein is Acetyl-coenzyme A carboxylase carboxyl transferase subunit alpha.